Reading from the N-terminus, the 94-residue chain is Co-chaperonin GroES (94 aa).

The protein belongs to the GroES chaperonin family. In terms of assembly, heptamer of 7 subunits arranged in a ring. Interacts with the chaperonin GroEL.

The protein resides in the cytoplasm. Its function is as follows. Together with the chaperonin GroEL, plays an essential role in assisting protein folding. The GroEL-GroES system forms a nano-cage that allows encapsulation of the non-native substrate proteins and provides a physical environment optimized to promote and accelerate protein folding. GroES binds to the apical surface of the GroEL ring, thereby capping the opening of the GroEL channel. The sequence is that of Co-chaperonin GroES from Ehrlichia chaffeensis (strain ATCC CRL-10679 / Arkansas).